Here is a 281-residue protein sequence, read N- to C-terminus: Phosphatidylglycerol--prolipoprotein diacylglyceryl transferase (281 aa).

Transmembrane regions (helical) follow at residues 23 to 43, 71 to 91, 107 to 127, and 133 to 153; these read VGPL…MFAW, FVIW…VLFY, WDGG…MILF, and IKVW…LGVV. Residue R154 coordinates a 1,2-diacyl-sn-glycero-3-phospho-(1'-sn-glycerol). Helical transmembrane passes span 189-209, 217-237, and 247-267; these read LYEA…LVWV, GFIA…VEFF, and LFGG…LIGL.

The protein belongs to the Lgt family.

The protein localises to the cell inner membrane. The catalysed reaction is L-cysteinyl-[prolipoprotein] + a 1,2-diacyl-sn-glycero-3-phospho-(1'-sn-glycerol) = an S-1,2-diacyl-sn-glyceryl-L-cysteinyl-[prolipoprotein] + sn-glycerol 1-phosphate + H(+). It participates in protein modification; lipoprotein biosynthesis (diacylglyceryl transfer). In terms of biological role, catalyzes the transfer of the diacylglyceryl group from phosphatidylglycerol to the sulfhydryl group of the N-terminal cysteine of a prolipoprotein, the first step in the formation of mature lipoproteins. The sequence is that of Phosphatidylglycerol--prolipoprotein diacylglyceryl transferase from Brucella anthropi (strain ATCC 49188 / DSM 6882 / CCUG 24695 / JCM 21032 / LMG 3331 / NBRC 15819 / NCTC 12168 / Alc 37) (Ochrobactrum anthropi).